The following is a 459-amino-acid chain: Aluminum-activated malate transporter 1 (459 aa).

The Extracellular segment spans residues 1–52 (MDIDHGRESDGEMVGTIASCGLLLHSLLAGLGRRAAGFARKVGGAAREDPRR). Transmembrane regions (helical) follow at residues 53 to 73 (VAHS…YFVT) and 74 to 94 (PLFN…VVVM). The Extracellular segment spans residues 95 to 108 (EYTVGATLSKGLNR). The chain crosses the membrane as a helical span at residues 109–129 (ALATLVAGCIAVGAHQLAELA). The Cytoplasmic segment spans residues 130-137 (ERCGDQGE). A helical transmembrane segment spans residues 138-158 (PIVLTVLVFFVASAATFLRFI). The Extracellular segment spans residues 159-160 (PE). A helical membrane pass occupies residues 161-181 (IKAKYDYGVTIFILTFGLVAV). Residues 182–199 (SSYRVEELIQLAHQRFYT) are Cytoplasmic-facing. Residues 200–220 (IAVGVFICLCTTVFLFPVWAG) traverse the membrane as a helical segment. The Extracellular portion of the chain corresponds to 221 to 459 (EDVHKLASGN…DEPLPDVVIL (239 aa)).

The protein belongs to the aromatic acid exporter (TC 2.A.85) family. In terms of tissue distribution, detected in root tips.

It localises to the cell membrane. With respect to regulation, activated by external aluminum. The enhancement of malate transport is not due to alteration in the selectivity properties but is due to an increased anion permeability. Its function is as follows. Malate transporter critical for aluminum tolerance. Permeable to chloride, nitrate, sulfate and malate. The sequence is that of Aluminum-activated malate transporter 1 (ALMT1) from Triticum aestivum (Wheat).